Reading from the N-terminus, the 244-residue chain is NAD-dependent protein deacetylase (244 aa).

Positions 1 to 244 (MTGEQLAHWI…LSAVQRAVMP (244 aa)) constitute a Deacetylase sirtuin-type domain. Ala22, Thr26, Phe33, Arg34, Gln103, Ile105, Asp106, and His121 together coordinate NAD(+). Phe33 contacts nicotinamide. Ile105 and Asp106 together coordinate nicotinamide. The active-site Proton acceptor is the His121. Positions 129, 132, 150, and 152 each coordinate Zn(2+). Residues Thr190, Ser191, Asn213, and Leu231 each coordinate NAD(+).

Belongs to the sirtuin family. Class U subfamily. Zn(2+) serves as cofactor.

Its subcellular location is the cytoplasm. It carries out the reaction N(6)-acetyl-L-lysyl-[protein] + NAD(+) + H2O = 2''-O-acetyl-ADP-D-ribose + nicotinamide + L-lysyl-[protein]. Its function is as follows. NAD-dependent protein deacetylase which modulates the activities of several enzymes which are inactive in their acetylated form. In Cutibacterium acnes (strain DSM 16379 / KPA171202) (Propionibacterium acnes), this protein is NAD-dependent protein deacetylase.